A 471-amino-acid chain; its full sequence is Tetratricopeptide repeat protein 29 (471 aa).

TPR repeat units lie at residues 92-131 (DKLR…EAAE), 136-173 (YEEV…AQLI), 182-215 (AEAE…TQGR), 234-267 (VRTY…AREG), 274-307 (GEAS…STSL), 314-347 (GRAY…ARNN), and 354-387 (IQAC…AMEV).

The protein localises to the cytoplasm. Its subcellular location is the cytoskeleton. It localises to the flagellum axoneme. Axonemal protein which is implicated in axonemal and/or peri-axonemal structure assembly and regulates flagellum assembly and beating and therefore sperm motility. This is Tetratricopeptide repeat protein 29 (Ttc29) from Rattus norvegicus (Rat).